The chain runs to 243 residues: Small ribosomal subunit protein uS5 (243 aa).

Composition is skewed to basic and acidic residues over residues 1–21 and 34–46; these read MPIDKKQEKNFTNKIQEEGQK and LEEKLNKNPDHKG. The interval 1-85 is disordered; it reads MPIDKKQEKN…NFKKNANKKP (85 aa). Residues 89–152 form the S5 DRBM domain; sequence FEEKIVNIAR…KDAQNNLIRV (64 aa).

Belongs to the universal ribosomal protein uS5 family. As to quaternary structure, part of the 30S ribosomal subunit. Contacts proteins S4 and S8.

With S4 and S12 plays an important role in translational accuracy. Functionally, located at the back of the 30S subunit body where it stabilizes the conformation of the head with respect to the body. The chain is Small ribosomal subunit protein uS5 from Mycoplasma mobile (strain ATCC 43663 / 163K / NCTC 11711) (Mesomycoplasma mobile).